Reading from the N-terminus, the 117-residue chain is Large ribosomal subunit protein uL18 (117 aa).

Belongs to the universal ribosomal protein uL18 family. Part of the 50S ribosomal subunit; part of the 5S rRNA/L5/L18/L25 subcomplex. Contacts the 5S and 23S rRNAs.

Its function is as follows. This is one of the proteins that bind and probably mediate the attachment of the 5S RNA into the large ribosomal subunit, where it forms part of the central protuberance. This Idiomarina loihiensis (strain ATCC BAA-735 / DSM 15497 / L2-TR) protein is Large ribosomal subunit protein uL18.